Consider the following 464-residue polypeptide: IAA-amino acid hydrolase ILR1-like 6 (464 aa).

The first 24 residues, 1 to 24 (MDNLRKLNLLSVSLTIIFVSLTIA), serve as a signal peptide directing secretion. The Mn(2+) site is built by cysteine 175, histidine 177, glutamate 211, histidine 235, and histidine 433.

This sequence belongs to the peptidase M20 family.

It carries out the reaction a jasmonyl-L-amino acid + H2O = a jasmonate + an L-alpha-amino acid. Functionally, hydrolyzes certain amino acid conjugates of the plant growth regulator indole-3-acetic acid (IAA). Also hydrolyzes amino acid conjugates of jasmonic acid and 12-hydroxy jasmonic acid. The sequence is that of IAA-amino acid hydrolase ILR1-like 6 from Arabidopsis thaliana (Mouse-ear cress).